The primary structure comprises 404 residues: XK-related protein 8 (404 aa).

Helical transmembrane passes span 14–34 (FVFSVIGACTFLVDWGSDVWL), 44–64 (VTWFWVLVGLMALSSFVVQTF), 169–189 (AVQFVSIAASTTSIAWMVVDY), 209–229 (LIYFLWNLLLIAPRVAALALC), 232–252 (VLSGYMAAHFLMLWSAFALWA), 262–282 (SVAGEWLYRATVGLIWYFSWF), 293–313 (SAIYHSFISTDGAILLATWWC), and 324–344 (ALALLIALPLFHFLGLLFKAL).

This sequence belongs to the XK family.

It is found in the cell membrane. The catalysed reaction is a 1,2-diacyl-sn-glycero-3-phospho-L-serine(in) = a 1,2-diacyl-sn-glycero-3-phospho-L-serine(out). Its function is as follows. Phospholipid scramblase that promotes phosphatidylserine exposure on apoptotic cell surface, possibly by mediating phospholipid scrambling. Phosphatidylserine is a specific marker only present at the surface of apoptotic cells and acts as a specific signal for engulfment. The chain is XK-related protein 8 from Gasterosteus aculeatus (Three-spined stickleback).